We begin with the raw amino-acid sequence, 158 residues long: 14-3-3 protein gamma (158 aa).

Residues 1-158 (AAAMKNVTEL…TSDQQDDDGG (158 aa)) form an interaction with SPATA18/MIEAP region. Residue serine 48 is modified to Phosphoserine. Tyrosine 60 carries the phosphotyrosine modification. Residue threonine 72 is modified to Phosphothreonine. Phosphoserine is present on serine 130. Threonine 149 carries the phosphothreonine modification. At serine 150 the chain carries Phosphoserine.

This sequence belongs to the 14-3-3 family. As to quaternary structure, homodimer. Part of a complex that contains DSG3, PKP1, YAP1 and YWHAG; the complex is required for localization of DSG3 and YAP1 to the cell membrane in keratinocytes. Interacts with SAMSN1. Interacts with RAF1, SSH1 and CRTC2/TORC2. Interacts with ABL1 (phosphorylated form); the interaction retains it in the cytoplasm. Interacts with GAB2. Interacts with MDM4 (phosphorylated); negatively regulates MDM4 activity toward TP53. Interacts with PKA-phosphorylated AANAT and SIRT2. Interacts with the 'Thr-369' phosphorylated form of DAPK2. Interacts with PI4KB, TBC1D22A and TBC1D22B. Interacts with SLITRK1. Interacts with LRRK2; this interaction is dependent on LRRK2 phosphorylation. Interacts with MARK2 and MARK3. Interacts with MEFV. Interacts with ENDOG, TSC2 and PIK3C3; interaction with ENDOG weakens its interaction with TSC2 and PIK3C3. Interacts with (phosphorylated) WDR24. Interacts with BEST1; this interaction promotes L-glutamate channel activity leading to the positive regulation of NMDA glutamate receptor activity through the L-glutamate secretion. Interacts with PKP1 (when phosphorylated); the interaction results in translocation of PKP1 to the cytoplasm and loss of intercellular adhesion in keratinocytes. Interacts with SPATA18/MIEAP; a protein that also plays a role in MALM. Post-translationally, phosphorylated by various PKC isozymes.

The protein localises to the cytoplasm. The protein resides in the cytosol. It localises to the mitochondrion matrix. Adapter protein implicated in the regulation of a large spectrum of both general and specialized signaling pathways. Binds to a large number of partners, usually by recognition of a phosphoserine or phosphothreonine motif. Binding generally results in the modulation of the activity of the binding partner. Promotes inactivation of WDR24 component of the GATOR2 complex by binding to phosphorylated WDR24. Participates in the positive regulation of NMDA glutamate receptor activity by promoting the L-glutamate secretion through interaction with BEST1. Reduces keratinocyte intercellular adhesion, via interacting with PKP1 and sequestering it in the cytoplasm, thereby reducing its incorporation into desmosomes. Plays a role in mitochondrial protein catabolic process (also named MALM) that promotes the degradation of damaged proteins inside mitochondria. This is 14-3-3 protein gamma from Ovis aries (Sheep).